The sequence spans 178 residues: MAIILGIDPGSRLTGYGVIEQRGRQLNYLGSGCIKVIGTTKEPLTLAEKLRRIHDSVSELITQFKPNEFAIEQVFMAKNPDSALKLGQARGAAIVAAACAELPVAEYSARQIKQSVVGNGGAEKSQVQHMVMALLNLQRCPQEDAADALAVALCHAHSSQNLIKMAGAARKTVRGRLR.

Active-site residues include Asp-8, Glu-72, and Asp-144. The Mg(2+) site is built by Asp-8, Glu-72, and Asp-144.

It belongs to the RuvC family. In terms of assembly, homodimer which binds Holliday junction (HJ) DNA. The HJ becomes 2-fold symmetrical on binding to RuvC with unstacked arms; it has a different conformation from HJ DNA in complex with RuvA. In the full resolvosome a probable DNA-RuvA(4)-RuvB(12)-RuvC(2) complex forms which resolves the HJ. Mg(2+) is required as a cofactor.

It is found in the cytoplasm. It catalyses the reaction Endonucleolytic cleavage at a junction such as a reciprocal single-stranded crossover between two homologous DNA duplexes (Holliday junction).. Its function is as follows. The RuvA-RuvB-RuvC complex processes Holliday junction (HJ) DNA during genetic recombination and DNA repair. Endonuclease that resolves HJ intermediates. Cleaves cruciform DNA by making single-stranded nicks across the HJ at symmetrical positions within the homologous arms, yielding a 5'-phosphate and a 3'-hydroxyl group; requires a central core of homology in the junction. The consensus cleavage sequence is 5'-(A/T)TT(C/G)-3'. Cleavage occurs on the 3'-side of the TT dinucleotide at the point of strand exchange. HJ branch migration catalyzed by RuvA-RuvB allows RuvC to scan DNA until it finds its consensus sequence, where it cleaves and resolves the cruciform DNA. The chain is Crossover junction endodeoxyribonuclease RuvC from Idiomarina loihiensis (strain ATCC BAA-735 / DSM 15497 / L2-TR).